The sequence spans 156 residues: Small ribosomal subunit protein uS7 (156 aa).

It belongs to the universal ribosomal protein uS7 family. As to quaternary structure, part of the 30S ribosomal subunit. Contacts proteins S9 and S11.

Functionally, one of the primary rRNA binding proteins, it binds directly to 16S rRNA where it nucleates assembly of the head domain of the 30S subunit. Is located at the subunit interface close to the decoding center, probably blocks exit of the E-site tRNA. The protein is Small ribosomal subunit protein uS7 of Aster yellows witches'-broom phytoplasma (strain AYWB).